The chain runs to 1103 residues: Ubiquitin carboxyl-terminal hydrolase 7 (1103 aa).

The segment covering 1–11 (MNHQQQQQQQQ) has biased composition (low complexity). Disordered stretches follow at residues 1–41 (MNHQ…TQNP) and 46–65 (NVTL…DDTS). The interval 1–209 (MNHQQQQQQQ…APHGVAWDSK (209 aa)) is interaction with TSPYL5. Position 19 is a phosphoserine (serine 19). Acidic residues predominate over residues 20-32 (EPEDMEMEAGDTD). Phosphoserine occurs at positions 50 and 54. Residues 54 to 209 (SNAEEDMEDD…APHGVAWDSK (156 aa)) are interaction with p53/TP53 and MDM2. The 128-residue stretch at 69–196 (EATFQFTVER…DDKVTFEVFV (128 aa)) folds into the MATH domain. Positions 71–206 (TFQFTVERFS…QADAPHGVAW (136 aa)) are necessary for nuclear localization. Positions 215 to 522 (VGLKNQGATC…NAYMLVYIRE (308 aa)) constitute a USP domain. Cysteine 224 serves as the catalytic Nucleophile. Residue histidine 465 is the Proton acceptor of the active site. At lysine 870 the chain carries N6-acetyllysine; alternate. Residue lysine 870 forms a Glycyl lysine isopeptide (Lys-Gly) (interchain with G-Cter in SUMO2); alternate linkage. A Glycyl lysine isopeptide (Lys-Gly) (interchain with G-Cter in ubiquitin); alternate cross-link involves residue lysine 870. Lysine 883 participates in a covalent cross-link: Glycyl lysine isopeptide (Lys-Gly) (interchain with G-Cter in SUMO2). Serine 964 bears the Phosphoserine mark. An N6-acetyllysine mark is found at lysine 1085 and lysine 1097.

It belongs to the peptidase C19 family. Monomer. Homodimer. Part of a complex with DAXX, MDM2, RASSF1 and USP7. Part of a complex with DAXX, MDM2 and USP7. Interacts with MDM2; the interaction is independent of p53/TP53. Interacts with DAXX; the interaction is direct and independent of MDM2 and p53/TP53. Component of a complex composed of KMT2E, OGT and USP7; the complex stabilizes KMT2E, preventing KMT2E ubiquitination and proteasomal-mediated degradation. Interacts (via MATH domain) with KMT2E. Interacts with OGT. Interacts with FOXO4; the interaction is enhanced in presence of hydrogen peroxide and occurs independently of p53/TP53. Interacts with p53/TP53; the interaction is enhanced in response to DNA damage; the interaction is impaired by TSPYL5. Interacts with PTEN; the interaction is direct. Interacts with ATXN1 and the strength of interaction is influenced by the length of the poly-Gln region in ATXN1. A weaker interaction seen with mutants having longer poly-Gln regions. Interacts with KIAA1530/UVSSA. Interacts with MEX3C and antagonizes its ability to degrade mRNA. Interacts with DNMT1 and UHRF1. Interacts with FOXP3. Interacts (via MATH domain) with RNF220. Associated component of the Polycomb group (PcG) multiprotein PRC1-like complex. Interacts with EPOP. Interacts with OTUD4 and USP9X; the interaction is direct. Interacts with CRY2. Interacts with REST. Interacts with ERCC6. Part of a complex consisting of USP7, MAGEL2 and TRIM27; directly interacts with MAGEL2; directly interacts with TRIM27. Post-translationally, polyneddylated. In terms of processing, not sumoylated. Polyubiquitinated. Ubiquitinated at Lys-870. As to expression, widely expressed. High expression is detected in brain, bone marrow, thymus and testis.

It localises to the nucleus. The protein resides in the cytoplasm. The protein localises to the PML body. Its subcellular location is the chromosome. It carries out the reaction Thiol-dependent hydrolysis of ester, thioester, amide, peptide and isopeptide bonds formed by the C-terminal Gly of ubiquitin (a 76-residue protein attached to proteins as an intracellular targeting signal).. In terms of biological role, hydrolase that deubiquitinates target proteins such as ARMC5, FOXO4, DEPTOR, KAT5, p53/TP53, MDM2, ERCC6, DNMT1, UHRF1, PTEN, KMT2E/MLL5 and DAXX. Together with DAXX, prevents MDM2 self-ubiquitination and enhances the E3 ligase activity of MDM2 towards p53/TP53, thereby promoting p53/TP53 ubiquitination and proteasomal degradation. Deubiquitinates p53/TP53, preventing degradation of p53/TP53, and enhances p53/TP53-dependent transcription regulation, cell growth repression and apoptosis. Deubiquitinates p53/TP53 and MDM2 and strongly stabilizes p53/TP53 even in the presence of excess MDM2, and also induces p53/TP53-dependent cell growth repression and apoptosis. Deubiquitination of FOXO4 in presence of hydrogen peroxide is not dependent on p53/TP53 and inhibits FOXO4-induced transcriptional activity. In association with DAXX, is involved in the deubiquitination and translocation of PTEN from the nucleus to the cytoplasm, both processes that are counteracted by PML. Deubiquitinates KMT2E preventing KMT2E proteasomal-mediated degradation. Involved in cell proliferation during early embryonic development. Involved in transcription-coupled nucleotide excision repair (TC-NER) in response to UV damage: recruited to DNA damage sites following interaction with KIAA1530/UVSSA and promotes deubiquitination of ERCC6, preventing UV-induced degradation of ERCC6. Involved in maintenance of DNA methylation via its interaction with UHRF1 and DNMT1: acts by mediating deubiquitination of UHRF1 and DNMT1, preventing their degradation and promoting DNA methylation by DNMT1. Deubiquitinates alkylation repair enzyme ALKBH3. OTUD4 recruits USP7 and USP9X to stabilize ALKBH3, thereby promoting the repair of alkylated DNA lesions. Acts as a chromatin regulator via its association with the Polycomb group (PcG) multiprotein PRC1-like complex; may act by deubiquitinating components of the PRC1-like complex. Able to mediate deubiquitination of histone H2B; it is however unsure whether this activity takes place in vivo. Exhibits a preference towards 'Lys-48'-linked ubiquitin chains. Increases regulatory T-cells (Treg) suppressive capacity by deubiquitinating and stabilizing the transcription factor FOXP3 which is crucial for Treg cell function. Plays a role in the maintenance of the circadian clock periodicity via deubiquitination and stabilization of the CRY1 and CRY2 proteins. Deubiquitinates REST, thereby stabilizing REST and promoting the maintenance of neural progenitor cells. Deubiquitinates SIRT7, inhibiting SIRT7 histone deacetylase activity and regulating gluconeogenesis. Involved in the regulation of WASH-dependent actin polymerization at the surface of endosomes and the regulation of endosomal protein recycling. It maintains optimal WASH complex activity and precise F-actin levels via deubiquitination of TRIM27 and WASHC1. Mediates the deubiquitination of phosphorylated DEPTOR, promoting its stability and leading to decreased mTORC1 signaling. The polypeptide is Ubiquitin carboxyl-terminal hydrolase 7 (Usp7) (Mus musculus (Mouse)).